Consider the following 70-residue polypeptide: Large ribosomal subunit protein uL29 (70 aa).

Belongs to the universal ribosomal protein uL29 family.

The chain is Large ribosomal subunit protein uL29 from Clostridium botulinum (strain Alaska E43 / Type E3).